The chain runs to 424 residues: Zinc metalloproteinase-disintegrin-like brevilysin H2a (424 aa).

Gln1 carries the pyrrolidone carboxylic acid modification. Positions 9-207 (RYVKLAIVAD…YKPQCILNEP (199 aa)) constitute a Peptidase M12B domain. N-linked (GlcNAc...) asparagine glycosylation is present at Asn69. Asp96 is a Ca(2+) binding site. Intrachain disulfides connect Cys120/Cys202, Cys164/Cys186, and Cys166/Cys169. His145 serves as a coordination point for Zn(2+). Glu146 is an active-site residue. Residues His149 and His155 each contribute to the Zn(2+) site. The N-linked (GlcNAc...) asparagine glycan is linked to Asn185. Residues Cys202, Asn205, Val217, Asn220, Leu222, Glu224, Glu227, and Asp230 each contribute to the Ca(2+) site. The region spanning 215–301 (PPVCGNELLE…DCPTDDLQRN (87 aa)) is the Disintegrin domain. 14 cysteine pairs are disulfide-bonded: Cys218–Cys247, Cys229–Cys242, Cys231–Cys237, Cys241–Cys264, Cys255–Cys261, Cys260–Cys286, Cys273–Cys293, Cys280–Cys312, Cys305–Cys317, Cys324–Cys374, Cys339–Cys385, Cys352–Cys362, Cys369–Cys411, and Cys405–Cys417. The short motif at 279-281 (DCD) is the D/ECD-tripeptide element. Ca(2+) contacts are provided by Asp281, Glu284, and Asp296. N-linked (GlcNAc...) asparagine glycosylation occurs at Asn331.

The protein belongs to the venom metalloproteinase (M12B) family. P-III subfamily. P-IIIa sub-subfamily. In terms of assembly, monomer. Zn(2+) is required as a cofactor. In terms of processing, glycosylated. In terms of tissue distribution, expressed by the venom gland.

The protein localises to the secreted. With respect to regulation, its proteolytic activity is inhibited by EDTA, TPEN, 1,10-phenanthroline, and some thiol compounds, but is enhanced by alkaline earth metal ions (Mg2+, Ca2+, Sr2+, and Ba2+). Its activity is not modulated by urea (4 M). Its function is as follows. Non-hemorrhagic metalloproteinase that degrades fibrinogen. The alpha chain (FGA) is rapidly degraded, the beta chain (FGB) is degraded very slowly, while the gamma chain is left intact. Shows a prefential cleavage at X-Leu bonds. Cleaves insulin B chain at '29-His-|-Leu-30', '33-Ser-|-His-34', '38-Ala-|-Leu-39' and '40-Tyr-|-Leu-41' bonds. The chain is Zinc metalloproteinase-disintegrin-like brevilysin H2a from Gloydius brevicauda (Korean slamosa snake).